Here is a 162-residue protein sequence, read N- to C-terminus: MISTPLDDLDRAILKLLKKDARLTIAEISNQLKKPESTVHFRIKKLQERGVIEKYTIILGEPIRPRELALVVLEVDKPIIEDFLDRYMEYVTKTLSGFPEVLFVAKSGKEKIVALVGGEDRDKLLKFIEENIESIPTLRSVQVLPISEIKKGDEISGFLAEV.

Residues 6–99 (LDDLDRAILK…YVTKTLSGFP (94 aa)) enclose the HTH asnC-type domain. Residues 25–44 (IAEISNQLKKPESTVHFRIK) constitute a DNA-binding region (H-T-H motif).

This is an uncharacterized protein from Pyrococcus horikoshii (strain ATCC 700860 / DSM 12428 / JCM 9974 / NBRC 100139 / OT-3).